Here is a 617-residue protein sequence, read N- to C-terminus: Protein DWARF AND LOW-TILLERING (617 aa).

2 disordered regions span residues 29 to 92 (KRGS…HDED) and 159 to 206 (PSLA…GVPA). A compositionally biased stretch (low complexity) spans 171-187 (KSPSDSSSSSGTDGGSS). Positions 208–594 (GQAEREALEL…QPLYTVTAWT (387 aa)) constitute a GRAS domain. The segment at 215–295 (LELVRALTAC…LTDDAFGGGD (81 aa)) is leucine repeat I (LRI). The VHIID stretch occupies residues 301-366 (LRILNAITPI…VPPAHVRITG (66 aa)). Positions 332–336 (VHVID) match the VHIID motif. The tract at residues 376-408 (ETGARLARVAAALGLAFEFHAVVDRLEDVRLWM) is leucine repeat II (LRII). The interval 417 to 508 (VAVNCVLAMH…EEMFAREIRN (92 aa)) is PFYRE. An SAW region spans residues 511–594 (AFEGPERFER…QPLYTVTAWT (84 aa)). The segment at 596–617 (AGDGAGGSTVSASTTASHSQQS) is disordered. Residues 603–617 (STVSASTTASHSQQS) show a composition bias toward low complexity.

It belongs to the GRAS family. Interacts with GSK2. Interacts with SMOS1 (via C-terminus). Phosphorylated on serine and threonine residues by GSK2. Dephosphorylated during response to brassinosteroid. In terms of tissue distribution, expressed in the shoot apical meristem (SAM) and elongating cells of young seedlings. Expressed in leaf joints, culms, internodes, stems, young panicles, primary roots and lateral roots.

The protein localises to the nucleus. Functionally, probable transcription factor that acts as a positive regulator of brassinosteroid (BR) signaling. Functions downstream of BRI1 and GSK2 to modulate BR responses. Acts as a direct target of GSK2 kinase to mediate BR responses. Involved in feedback inhibition of BR biosynthetic genes. Repressed by BZR1. Cooperatively functions in a transactivating complex with SMOS1 to enhance the transcription of the SMOS1 target PHI-1, and regulate plant organ size. Interaction between SMOS1 and DLT is a crosstalk point for auxin and brassinosteroid signaling. The protein is Protein DWARF AND LOW-TILLERING of Oryza sativa subsp. japonica (Rice).